The following is a 366-amino-acid chain: UDP-N-acetylglucosamine--N-acetylmuramyl-(pentapeptide) pyrophosphoryl-undecaprenol N-acetylglucosamine transferase (366 aa).

UDP-N-acetyl-alpha-D-glucosamine contacts are provided by residues 10–12, N124, R166, S196, and Q296; that span reads TGG.

It belongs to the glycosyltransferase 28 family. MurG subfamily.

The protein localises to the cell membrane. It catalyses the reaction di-trans,octa-cis-undecaprenyl diphospho-N-acetyl-alpha-D-muramoyl-L-alanyl-D-glutamyl-meso-2,6-diaminopimeloyl-D-alanyl-D-alanine + UDP-N-acetyl-alpha-D-glucosamine = di-trans,octa-cis-undecaprenyl diphospho-[N-acetyl-alpha-D-glucosaminyl-(1-&gt;4)]-N-acetyl-alpha-D-muramoyl-L-alanyl-D-glutamyl-meso-2,6-diaminopimeloyl-D-alanyl-D-alanine + UDP + H(+). It functions in the pathway cell wall biogenesis; peptidoglycan biosynthesis. In terms of biological role, cell wall formation. Catalyzes the transfer of a GlcNAc subunit on undecaprenyl-pyrophosphoryl-MurNAc-pentapeptide (lipid intermediate I) to form undecaprenyl-pyrophosphoryl-MurNAc-(pentapeptide)GlcNAc (lipid intermediate II). This is UDP-N-acetylglucosamine--N-acetylmuramyl-(pentapeptide) pyrophosphoryl-undecaprenol N-acetylglucosamine transferase from Alkaliphilus oremlandii (strain OhILAs) (Clostridium oremlandii (strain OhILAs)).